Reading from the N-terminus, the 215-residue chain is Chloramphenicol acetyltransferase (215 aa).

The active-site Proton acceptor is the His189.

It belongs to the chloramphenicol acetyltransferase family. Homotrimer.

It catalyses the reaction chloramphenicol + acetyl-CoA = chloramphenicol 3-acetate + CoA. In terms of biological role, this enzyme is an effector of chloramphenicol resistance in bacteria. This is Chloramphenicol acetyltransferase (cat) from Staphylococcus aureus.